The sequence spans 594 residues: Potassium-transporting ATPase potassium-binding subunit (594 aa).

The next 12 membrane-spanning stretches (helical) occupy residues 4 to 24 (QFFG…PFLG), 65 to 85 (QYAV…YALQ), 136 to 156 (ALTV…FALI), 179 to 199 (LYVL…QGVI), 287 to 307 (LEML…GEMV), 314 to 334 (VAIL…TQNA), 361 to 381 (FGVA…CGAV), 390 to 410 (AMGG…FGGV), 413 to 433 (GLYG…LMIG), 450 to 470 (MVSI…ALAV), 518 to 538 (LLGL…LALA), and 560 to 580 (LFIV…YVPA).

It belongs to the KdpA family. In terms of assembly, the system is composed of three essential subunits: KdpA, KdpB and KdpC.

The protein resides in the cell inner membrane. In terms of biological role, part of the high-affinity ATP-driven potassium transport (or Kdp) system, which catalyzes the hydrolysis of ATP coupled with the electrogenic transport of potassium into the cytoplasm. This subunit binds the periplasmic potassium ions and delivers the ions to the membrane domain of KdpB through an intramembrane tunnel. This chain is Potassium-transporting ATPase potassium-binding subunit, found in Bordetella avium (strain 197N).